A 154-amino-acid polypeptide reads, in one-letter code: UPF0756 membrane protein EAT1b_0668 (154 aa).

The next 5 helical transmembrane spans lie at 5 to 25, 52 to 72, 82 to 102, 107 to 127, and 129 to 149; these read LFLL…VIIA, WGVT…DIGF, PVGI…GQGV, VDPV…GFMK, and IPVG…GYQV.

Belongs to the UPF0756 family.

The protein resides in the cell membrane. This Exiguobacterium sp. (strain ATCC BAA-1283 / AT1b) protein is UPF0756 membrane protein EAT1b_0668.